Consider the following 695-residue polypeptide: Electrogenic aspartate/glutamate antiporter Aralar, mitochondrial (695 aa).

The N-terminal domain stretch occupies residues 1–310 (MPMHIPFPFN…DYSDLSNIAP (310 aa)). The Mitochondrial intermembrane portion of the chain corresponds to 2 to 345 (PMHIPFPFNW…FIQVLESSYR (344 aa)). EF-hand domains are found at residues 71–104 (FNDE…GLLC), 105–140 (TPDA…TELH), 142–175 (KIPF…LLHD), and 176–211 (FHEE…VKRH). Residues aspartate 84, serine 86, aspartate 88, leucine 90, glutamate 95, aspartate 118, asparagine 122, threonine 124, and aspartate 129 each coordinate Ca(2+). Aspartate 189, threonine 193, and aspartate 200 together coordinate Ca(2+). Residues 311 to 327 (EHYTKHMTHRLAEIKAV) are linker loop domain. The interval 336–627 (FIQVLESSYR…RLFYVDFGGT (292 aa)) is carrier domain. Solcar repeat units lie at residues 340-431 (LESS…VRDK), 439-523 (IPTW…TKAM), and 531-619 (NHPL…LQRL). The helical transmembrane segment at 346–363 (FTLGSFAGAVGATVVYPI) threads the bilayer. Topologically, residues 364–405 (DLVKTRMQNQRAGSYIGEVAYRNSWDCFKKVVRHEGFMGLYR) are mitochondrial matrix. Residues 406–425 (GLLPQLMGVAPEKAIKLTVN) traverse the membrane as a helical segment. Residues 426–448 (DLVRDKLTDKKGNIPTWAEVLAG) are Mitochondrial intermembrane-facing. A helical transmembrane segment spans residues 449 to 462 (GCAGASQVVFTNPL). Residues 463 to 497 (EIVKIRLQVAGEIASGSKIRAWSVVRELGLFGLYK) lie on the Mitochondrial matrix side of the membrane. A helical transmembrane segment spans residues 498–517 (GARACLLRDVPFSAIYFPTY). At 518–536 (AHTKAMMADKDGYNHPLTL) the chain is on the mitochondrial intermembrane side. The helical transmembrane segment at 537–554 (LAAGAIAGVPAASLVTPA) threads the bilayer. Residues 555 to 593 (DVIKTRLQVVARSGQTTYTGVWDATKKIMAEEGPRAFWK) are Mitochondrial matrix-facing. A helical transmembrane segment spans residues 594–613 (GTAARVFRSSPQFGVTLVTY). The Mitochondrial intermembrane segment spans residues 614–695 (ELLQRLFYVD…AASPSTATGS (82 aa)). The tract at residues 628 to 695 (QPKGSEAHKI…AASPSTATGS (68 aa)) is C-terminal domain.

Belongs to the mitochondrial carrier (TC 2.A.29) family. In terms of assembly, homodimer (via N-terminus). It depends on Ca(2+) as a cofactor. As to expression, expressed throughout the body in both males and females, including in ovaries and testes. Specifically expressed in female ovaries. In terms of tissue distribution, expressed throughout the body in both males and females but absent from ovaries and testes.

The protein resides in the mitochondrion inner membrane. The catalysed reaction is L-aspartate(in) + L-glutamate(out) + H(+)(out) = L-aspartate(out) + L-glutamate(in) + H(+)(in). The enzyme catalyses 3-sulfino-L-alanine(out) + L-glutamate(in) + H(+)(in) = 3-sulfino-L-alanine(in) + L-glutamate(out) + H(+)(out). It carries out the reaction L-2-aminoadipate(in) + L-glutamate(out) + H(+)(out) = L-2-aminoadipate(out) + L-glutamate(in) + H(+)(in). It catalyses the reaction L-glutamine(in) + L-glutamate(out) + Na(+)(out) + H(+)(out) = L-glutamine(out) + L-glutamate(in) + Na(+)(in) + H(+)(in). With respect to regulation, activated by Ca(2+). Inhibited by p-chloromercuribenzoate, pyrocarbonate, mersalyl, tannic acid and N-ethylmaleimide. Functionally, mitochondrial electrogenic aspartate/glutamate antiporter that favors efflux of aspartate and entry of glutamate and proton within the mitochondria as part of the malate-aspartate shuttle. Also mediates the exchange of L-cysteinesulfinate (3-sulfino-L-alanine) for L-glutamate. Necessary for gamma-aminobutyric acid (GABA) uptake in brain mitochondria in response to increased mitochondrial membrane polarization; does not possess detectable GABA transport activity but role may be indirect. Its function is as follows. Possesses transport activity towards L-aspartate, L-glutamate and L-cysteinesulfinate (3-sulfino-L-alanine). L-glutamine transport activity is undetectable. GABA transport activity is undetectable. Possesses transport activity towards L-aspartate, L-glutamate and L-cysteinesulfinate (3-sulfino-L-alanine). Has a wider substrate specificity range that includes L-2-aminoadipate and L-glutamine. GABA transport activity is undetectable. This Drosophila melanogaster (Fruit fly) protein is Electrogenic aspartate/glutamate antiporter Aralar, mitochondrial.